A 417-amino-acid polypeptide reads, in one-letter code: Gamma-glutamyl phosphate reductase (417 aa).

This sequence belongs to the gamma-glutamyl phosphate reductase family.

It localises to the cytoplasm. It carries out the reaction L-glutamate 5-semialdehyde + phosphate + NADP(+) = L-glutamyl 5-phosphate + NADPH + H(+). The protein operates within amino-acid biosynthesis; L-proline biosynthesis; L-glutamate 5-semialdehyde from L-glutamate: step 2/2. Catalyzes the NADPH-dependent reduction of L-glutamate 5-phosphate into L-glutamate 5-semialdehyde and phosphate. The product spontaneously undergoes cyclization to form 1-pyrroline-5-carboxylate. This is Gamma-glutamyl phosphate reductase from Escherichia coli (strain K12 / MC4100 / BW2952).